We begin with the raw amino-acid sequence, 264 residues long: Tryptophan synthase alpha chain (264 aa).

Residues glutamate 49 and aspartate 60 each act as proton acceptor in the active site.

Belongs to the TrpA family. As to quaternary structure, tetramer of two alpha and two beta chains.

It catalyses the reaction (1S,2R)-1-C-(indol-3-yl)glycerol 3-phosphate + L-serine = D-glyceraldehyde 3-phosphate + L-tryptophan + H2O. It participates in amino-acid biosynthesis; L-tryptophan biosynthesis; L-tryptophan from chorismate: step 5/5. Its function is as follows. The alpha subunit is responsible for the aldol cleavage of indoleglycerol phosphate to indole and glyceraldehyde 3-phosphate. In Synechocystis sp. (strain ATCC 27184 / PCC 6803 / Kazusa), this protein is Tryptophan synthase alpha chain.